The following is a 459-amino-acid chain: tRNA modification GTPase MnmE (459 aa).

(6S)-5-formyl-5,6,7,8-tetrahydrofolate contacts are provided by arginine 22, glutamate 85, and arginine 124. In terms of domain architecture, TrmE-type G spans 221-380 (GLSTVIVGRP…LEIQIKDLFF (160 aa)). K(+) is bound at residue asparagine 231. GTP-binding positions include 231-236 (NVGKSS), 250-256 (TEVAGTT), and 275-278 (DTAG). A Mg(2+)-binding site is contributed by serine 235. K(+) contacts are provided by threonine 250, valine 252, and threonine 255. Threonine 256 provides a ligand contact to Mg(2+). Lysine 459 contacts (6S)-5-formyl-5,6,7,8-tetrahydrofolate.

This sequence belongs to the TRAFAC class TrmE-Era-EngA-EngB-Septin-like GTPase superfamily. TrmE GTPase family. As to quaternary structure, homodimer. Heterotetramer of two MnmE and two MnmG subunits. K(+) serves as cofactor.

The protein localises to the cytoplasm. Exhibits a very high intrinsic GTPase hydrolysis rate. Involved in the addition of a carboxymethylaminomethyl (cmnm) group at the wobble position (U34) of certain tRNAs, forming tRNA-cmnm(5)s(2)U34. In Staphylococcus epidermidis (strain ATCC 35984 / DSM 28319 / BCRC 17069 / CCUG 31568 / BM 3577 / RP62A), this protein is tRNA modification GTPase MnmE.